A 254-amino-acid polypeptide reads, in one-letter code: NFU1 iron-sulfur cluster scaffold homolog, mitochondrial (254 aa).

The N-terminal 9 residues, 1–9, are a transit peptide targeting the mitochondrion; that stretch reads MAATARRGW. A nifU region spans residues 173-241; it reads IKELLDTRIR…IPEVEGVEQV (69 aa). Cys-210 and Cys-213 together coordinate [4Fe-4S] cluster.

It belongs to the NifU family. Monomer and homohexamer; the apo-NFU1 is a monomer, while the holo-NFU1 is a hexamer composed of a trimer of dimer that is probably linked by some 4Fe-4S cluster. Interacts with HIRA and EPM2A/laforin. Interacts with BOLA3. Interacts with HSPA9. As to expression, ubiquitous. Expression in adult lung is weak compared to fetal lung.

The protein localises to the mitochondrion. The protein resides in the cytoplasm. It is found in the cytosol. Its function is as follows. Iron-sulfur cluster scaffold protein which can assemble [4Fe-4S] clusters and deliver them to target proteins. The chain is NFU1 iron-sulfur cluster scaffold homolog, mitochondrial (NFU1) from Homo sapiens (Human).